The chain runs to 216 residues: Somatotropin (216 aa).

The N-terminal stretch at 1 to 26 (MAAGPRTSMLLAFALLCLPWTQEVGA) is a signal peptide. Histidine 45 contacts Zn(2+). A disulfide bond links cysteine 78 and cysteine 189. Serine 131 bears the Phosphoserine mark. Glutamate 198 contacts Zn(2+). Cysteine 206 and cysteine 214 are oxidised to a cystine.

The protein belongs to the somatotropin/prolactin family.

It is found in the secreted. Functionally, plays an important role in growth control. Its major role in stimulating body growth is to stimulate the liver and other tissues to secrete IGF1. It stimulates both the differentiation and proliferation of myoblasts. It also stimulates amino acid uptake and protein synthesis in muscle and other tissues. This chain is Somatotropin (GH1), found in Balaenoptera physalus (Fin whale).